The sequence spans 341 residues: Protein RecA, plasmid (341 aa).

80–87 (GAESSGKT) is an ATP binding site.

This sequence belongs to the RecA family.

The protein resides in the cytoplasm. Can catalyze the hydrolysis of ATP in the presence of single-stranded DNA, the ATP-dependent uptake of single-stranded DNA by duplex DNA, and the ATP-dependent hybridization of homologous single-stranded DNAs. It interacts with LexA causing its activation and leading to its autocatalytic cleavage. The polypeptide is Protein RecA, plasmid (Lactococcus lactis subsp. lactis (Streptococcus lactis)).